The sequence spans 464 residues: Mitogen-activated protein kinase 10 (464 aa).

Residues tyrosine 64–isoleucine 359 form the Protein kinase domain. Residues isoleucine 70–valine 78 and lysine 93 contribute to the ATP site. Aspartate 189 acts as the Proton acceptor in catalysis. Threonine 221 carries the phosphothreonine; by MAP2K7 modification. The short motif at threonine 221–tyrosine 223 is the TXY element. Position 223 is a phosphotyrosine; by MAP2K4 (tyrosine 223). The tract at residues threonine 405 to arginine 464 is disordered. Residues valine 410–glutamate 454 show a composition bias toward polar residues. S-palmitoyl cysteine attachment occurs at residues cysteine 462 and cysteine 463.

The protein belongs to the protein kinase superfamily. CMGC Ser/Thr protein kinase family. MAP kinase subfamily. Interacts with MAPK8IP1/JIP-1, MAPK8IP3/JIP-3/JSAP1 and SPAG9/MAPK8IP4/JIP4. Interacts with HDAC9 and MAPKBP1. Interacts with ARRB2; the interaction enhances MAPK10 activation by MAP3K5. Interacts with SARM1. Interacts with JUND; interaction is inhibited in the presence of MEN1. The cofactor is Mg(2+). In terms of processing, dually phosphorylated on Thr-221 and Tyr-223 by MAP2K4 and MAP2K7, which activates the enzyme. MAP2K7 shows a strong preference for Thr-221 while MAP2K4 phosphorylates Tyr-223 preferentially. Weakly autophosphorylated on threonine and tyrosine residues in vitro. Post-translationally, palmitoylation regulates subcellular location and axonal development. As to expression, brain (at protein level). Expressed specifically in neurons of the hippocampus, cortex, cerebellum, brainstem, and spinal cord. Seems to be also found in testis, and very weakly in the heart.

The protein resides in the cytoplasm. The protein localises to the membrane. It localises to the nucleus. It is found in the mitochondrion. It catalyses the reaction L-seryl-[protein] + ATP = O-phospho-L-seryl-[protein] + ADP + H(+). The enzyme catalyses L-threonyl-[protein] + ATP = O-phospho-L-threonyl-[protein] + ADP + H(+). Its activity is regulated as follows. Activated by threonine and tyrosine phosphorylation by two dual specificity kinases, MAP2K4 and MAP2K7. MAP2K7 phosphorylates MAPK10 on Thr-221 causing a conformational change and a large increase in Vmax for the enzyme. MAP2K4 then phosphorylates Tyr-223 resulting in a further increase in Vmax. Inhibited by dual specificity phosphatases, such as DUSP1. Inhibited by HDAC9. Its function is as follows. Serine/threonine-protein kinase involved in various processes such as neuronal proliferation, differentiation, migration and programmed cell death. Extracellular stimuli such as pro-inflammatory cytokines or physical stress stimulate the stress-activated protein kinase/c-Jun N-terminal kinase (SAP/JNK) signaling pathway. In this cascade, two dual specificity kinases MAP2K4/MKK4 and MAP2K7/MKK7 phosphorylate and activate MAPK10/JNK3. In turn, MAPK10/JNK3 phosphorylates a number of transcription factors, primarily components of AP-1 such as JUN and ATF2 and thus regulates AP-1 transcriptional activity. Plays regulatory roles in the signaling pathways during neuronal apoptosis. Phosphorylates the neuronal microtubule regulator STMN2. Acts in the regulation of the amyloid-beta precursor protein/APP signaling during neuronal differentiation by phosphorylating APP. Also participates in neurite growth in spiral ganglion neurons. Phosphorylates the CLOCK-BMAL1 heterodimer and plays a role in the photic regulation of the circadian clock. Phosphorylates JUND and this phosphorylation is inhibited in the presence of MEN1. The chain is Mitogen-activated protein kinase 10 (Mapk10) from Mus musculus (Mouse).